A 384-amino-acid chain; its full sequence is Mannitol-1-phosphate 5-dehydrogenase (384 aa).

4 to 15 (AVHFGAGNIGRG) contacts NAD(+).

Belongs to the mannitol dehydrogenase family.

It carries out the reaction D-mannitol 1-phosphate + NAD(+) = beta-D-fructose 6-phosphate + NADH + H(+). This is Mannitol-1-phosphate 5-dehydrogenase from Lacticaseibacillus paracasei (strain ATCC 334 / BCRC 17002 / CCUG 31169 / CIP 107868 / KCTC 3260 / NRRL B-441) (Lactobacillus paracasei).